The following is a 191-amino-acid chain: MGKVIFISGIDTDVGKTIATGIYAKKLMEQGCSVITQKMIQTGCKNIADDLLVHRKIQGIDLTEEDLQGKTCPYVFEYPCSPHLAAKRESRKIEAKIIEKSTALLAEKYDYVLLEGAGGLMVPYCEEATTLDYIQLNNYPLILVTSGKLGSINHTLLSLEACRTRGISVLSVMYNGYPEYDLLLVKKPNAI.

ATP is bound at residue 13-18 (DVGKTI). Residue T17 coordinates Mg(2+). Residue K38 is part of the active site. Position 42 (T42) interacts with substrate. Residues D50 and 115 to 118 (EGAG) each bind ATP. Mg(2+) contacts are provided by D50 and E115.

It belongs to the dethiobiotin synthetase family. Homodimer. The cofactor is Mg(2+).

It localises to the cytoplasm. The enzyme catalyses (7R,8S)-7,8-diammoniononanoate + CO2 + ATP = (4R,5S)-dethiobiotin + ADP + phosphate + 3 H(+). Its pathway is cofactor biosynthesis; biotin biosynthesis; biotin from 7,8-diaminononanoate: step 1/2. Its function is as follows. Catalyzes a mechanistically unusual reaction, the ATP-dependent insertion of CO2 between the N7 and N8 nitrogen atoms of 7,8-diaminopelargonic acid (DAPA, also called 7,8-diammoniononanoate) to form a ureido ring. The chain is ATP-dependent dethiobiotin synthetase BioD 2 from Haemophilus influenzae (strain ATCC 51907 / DSM 11121 / KW20 / Rd).